A 1801-amino-acid chain; its full sequence is Sperm flagellar protein 2 (1801 aa).

In terms of domain architecture, Calponin-homology (CH) spans 1-105 (MSEILCQWLN…LLYQLYIALQ (105 aa)). Coiled-coil stretches lie at residues 176-260 (EKFE…KDLQ) and 321-395 (AHEA…TKQA). The segment at 632–659 (QDKNELTDTQVPGEAAPQKEGTKSSDFE) is disordered. Coiled-coil stretches lie at residues 722–748 (NQAKLLEEALTGYKRKSLQLKKKKAQM) and 869–895 (ATEVSNKKIKVEKKLEEKETEKKSAVS). Composition is skewed to basic and acidic residues over residues 883-892 (LEEKETEKKS) and 909-918 (EAEKEKEVHQ). Residues 883–949 (LEEKETEKKS…KISVKKSPID (67 aa)) are disordered. Residues 1051 to 1077 (EDLWEDEETKAELHQRVNDLRDRLWDI) are a coiled coil. Composition is skewed to basic and acidic residues over residues 1233–1250 (RLAEEEKEQPQLDPKEKS) and 1261–1295 (KEKEQAKKEKEQAKKEKEQAKKEKEPPKKKMAEKK). Disordered regions lie at residues 1233 to 1304 (RLAE…SPVV), 1651 to 1695 (KTSI…NANT), and 1781 to 1801 (SEHAQGSDGERSPSRLTDEKK). Residues 1252–1286 (QSGTNKKAKKEKEQAKKEKEQAKKEKEQAKKEKEP) adopt a coiled-coil conformation. Positions 1305-1657 (EVSPVTITPE…TAEKTSISSV (353 aa)) are interaction with IFT20. A coiled-coil region spans residues 1665-1695 (EAEENSTREELKEEKDERDQKEEEIPENANT). Residues 1669–1687 (NSTREELKEEKDERDQKEE) are compositionally biased toward basic and acidic residues.

Interacts (via C-terminus) with IFT20. Interacts with DYNC1I2. Predominantly expressed in ciliated tissues such as lung, trachea, testis, brain, and at lower levels in kidney and spleen.

It is found in the cell projection. The protein localises to the cilium. The protein resides in the flagellum. It localises to the cytoplasm. Its subcellular location is the golgi apparatus. Its function is as follows. Required for correct axoneme development in spermatozoa. Important for normal development of the manchette and sperm head morphology. Essential for male fertility. Plays a role in localization of the intraflagellar transport protein IFT20 to the manchette, suggesting function as an adapter for dynein-mediated protein transport during spermatogenesis. Also plays a role in bone growth where it seems to be required for normal osteoblast differentiation. In Rattus norvegicus (Rat), this protein is Sperm flagellar protein 2 (Spef2).